The following is a 49-amino-acid chain: Large ribosomal subunit protein eL40 (49 aa).

This sequence belongs to the eukaryotic ribosomal protein eL40 family.

This Methanococcoides burtonii (strain DSM 6242 / NBRC 107633 / OCM 468 / ACE-M) protein is Large ribosomal subunit protein eL40.